The primary structure comprises 158 residues: NAD(P)H-quinone oxidoreductase subunit J, chloroplastic (158 aa).

It belongs to the complex I 30 kDa subunit family. As to quaternary structure, NDH is composed of at least 16 different subunits, 5 of which are encoded in the nucleus.

It localises to the plastid. Its subcellular location is the chloroplast thylakoid membrane. It carries out the reaction a plastoquinone + NADH + (n+1) H(+)(in) = a plastoquinol + NAD(+) + n H(+)(out). The catalysed reaction is a plastoquinone + NADPH + (n+1) H(+)(in) = a plastoquinol + NADP(+) + n H(+)(out). Functionally, NDH shuttles electrons from NAD(P)H:plastoquinone, via FMN and iron-sulfur (Fe-S) centers, to quinones in the photosynthetic chain and possibly in a chloroplast respiratory chain. The immediate electron acceptor for the enzyme in this species is believed to be plastoquinone. Couples the redox reaction to proton translocation, and thus conserves the redox energy in a proton gradient. The chain is NAD(P)H-quinone oxidoreductase subunit J, chloroplastic from Solanum lycopersicum (Tomato).